Consider the following 121-residue polypeptide: Large ribosomal subunit protein uL14 (121 aa).

The protein belongs to the universal ribosomal protein uL14 family. Part of the 50S ribosomal subunit. Forms a cluster with proteins L3 and L19. In the 70S ribosome, L14 and L19 interact and together make contacts with the 16S rRNA in bridges B5 and B8.

Functionally, binds to 23S rRNA. Forms part of two intersubunit bridges in the 70S ribosome. The sequence is that of Large ribosomal subunit protein uL14 from Prochlorococcus marinus (strain MIT 9303).